The following is a 1213-amino-acid chain: DNA-directed RNA polymerase subunit beta' (1213 aa).

Positions 60, 62, 75, and 78 each coordinate Zn(2+). Aspartate 450, aspartate 452, and aspartate 454 together coordinate Mg(2+). Zn(2+) is bound by residues cysteine 819, cysteine 893, cysteine 900, and cysteine 903.

This sequence belongs to the RNA polymerase beta' chain family. As to quaternary structure, the RNAP catalytic core consists of 2 alpha, 1 beta, 1 beta' and 1 omega subunit. When a sigma factor is associated with the core the holoenzyme is formed, which can initiate transcription. It depends on Mg(2+) as a cofactor. The cofactor is Zn(2+).

It catalyses the reaction RNA(n) + a ribonucleoside 5'-triphosphate = RNA(n+1) + diphosphate. Functionally, DNA-dependent RNA polymerase catalyzes the transcription of DNA into RNA using the four ribonucleoside triphosphates as substrates. This is DNA-directed RNA polymerase subunit beta' from Streptococcus pyogenes serotype M28 (strain MGAS6180).